Consider the following 445-residue polypeptide: Putative ankyrin repeat protein L797 (445 aa).

ANK repeat units follow at residues 73–102 (FMED…DIYS), 285–314 (NHEH…ELVG), 315–344 (NLYI…DIRQ), and 346–375 (LDAF…IINI).

This is Putative ankyrin repeat protein L797 from Acanthamoeba polyphaga (Amoeba).